The sequence spans 501 residues: Aspartyl/glutamyl-tRNA(Asn/Gln) amidotransferase subunit B (501 aa).

Belongs to the GatB/GatE family. GatB subfamily. Heterotrimer of A, B and C subunits.

The enzyme catalyses L-glutamyl-tRNA(Gln) + L-glutamine + ATP + H2O = L-glutaminyl-tRNA(Gln) + L-glutamate + ADP + phosphate + H(+). It carries out the reaction L-aspartyl-tRNA(Asn) + L-glutamine + ATP + H2O = L-asparaginyl-tRNA(Asn) + L-glutamate + ADP + phosphate + 2 H(+). Functionally, allows the formation of correctly charged Asn-tRNA(Asn) or Gln-tRNA(Gln) through the transamidation of misacylated Asp-tRNA(Asn) or Glu-tRNA(Gln) in organisms which lack either or both of asparaginyl-tRNA or glutaminyl-tRNA synthetases. The reaction takes place in the presence of glutamine and ATP through an activated phospho-Asp-tRNA(Asn) or phospho-Glu-tRNA(Gln). In Mycobacterium sp. (strain KMS), this protein is Aspartyl/glutamyl-tRNA(Asn/Gln) amidotransferase subunit B.